An 809-amino-acid polypeptide reads, in one-letter code: Protein PHOX3 (809 aa).

The segment at 1-22 is disordered; sequence MEKQNEEISTDDAETSQSQLVD. TPR repeat units lie at residues 126 to 159, 164 to 199, 200 to 233, 235 to 265, and 274 to 311; these read AQGLKEEGNKLFQKRDYDGAMFKYGEAIKILPKD, SHVRANVASCYMQLEPGEFAKAIHECDLALSVTPDH, NKALLKRARCYEALNKLDLALRDVCMVSKLDPKN, MASEIVEKLKRTLESKGLRINNSVIELPPDY, and AALWAKLGKVRVKKTKKSNQVEEKSEGEGEDVEPEKKN. The interval 288–339 is disordered; the sequence is TKKSNQVEEKSEGEGEDVEPEKKNNVLAEKGKEKIKMKVKGKQSDKRSDTSK. Residue Ser298 is modified to Phosphoserine. Positions 307–339 are enriched in basic and acidic residues; sequence PEKKNNVLAEKGKEKIKMKVKGKQSDKRSDTSK. Positions 359–438 constitute a PB1 domain; sequence NKDVKFVYSD…GTMRFYVVEV (80 aa). TPR repeat units follow at residues 508–541, 563–597, and 615–648; these read SEAMEEVVTSDAAQGPFDRAAQQFQEVAARSLLN, ESVSEQVKTAYECAKKEHANAKEKYEEAMKIKPEC, and SWYYVLVSHLDLKTWPYADVVQFYQSAESNIKKS. The tract at residues 656-686 is disordered; the sequence is ETGKESEPSQAGKTDCLTHEKDLGSSTQNNP. The TPR 9 repeat unit spans residues 709-741; sequence SIMEYKLDQPFWRESLEAAMEKFELAGTCKDDV.

Carboxylate clamp type tetratricopeptide repeat protein that may act as a potential Hsp90/Hsp70 co-chaperone. Contributes to polar growth of root hairs. The protein is Protein PHOX3 of Arabidopsis thaliana (Mouse-ear cress).